Here is a 259-residue protein sequence, read N- to C-terminus: Adenylosuccinate synthetase (259 aa).

Residues 3 to 9 and 31 to 33 each bind GTP; these read GDEGKGK and GHT. Residue Asp-4 is the Proton acceptor of the active site. Mg(2+) is bound by residues Asp-4 and Gly-31. 4-7 is a binding site for IMP; that stretch reads DEGK. The Proton donor role is filled by His-32. 4 residues coordinate IMP: Thr-120, Arg-134, Gln-215, and Thr-230.

This sequence belongs to the adenylosuccinate synthetase family. In terms of assembly, homodimer. The cofactor is Mg(2+).

It is found in the cytoplasm. It carries out the reaction IMP + L-aspartate + GTP = N(6)-(1,2-dicarboxyethyl)-AMP + GDP + phosphate + 2 H(+). It functions in the pathway purine metabolism; AMP biosynthesis via de novo pathway; AMP from IMP: step 1/2. Plays an important role in the de novo pathway of purine nucleotide biosynthesis. Catalyzes the first committed step in the biosynthesis of AMP from IMP. The protein is Adenylosuccinate synthetase of Aggregatibacter actinomycetemcomitans (Actinobacillus actinomycetemcomitans).